The sequence spans 250 residues: Small ribosomal subunit protein uS2 (250 aa).

The protein belongs to the universal ribosomal protein uS2 family.

The chain is Small ribosomal subunit protein uS2 from Teredinibacter turnerae (strain ATCC 39867 / T7901).